We begin with the raw amino-acid sequence, 92 residues long: Large ribosomal subunit protein bL28 (92 aa).

Belongs to the bacterial ribosomal protein bL28 family.

The chain is Large ribosomal subunit protein bL28 from Borreliella afzelii (strain PKo) (Borrelia afzelii).